The following is a 405-amino-acid chain: Accessory Sec system protein translocase subunit SecY2 (405 aa).

10 helical membrane passes run 14-34 (LFTS…LPFV), 65-85 (IFSV…MFSF), 104-124 (MYLT…RLPV), 131-151 (ILVV…LVWL), 156-176 (ASMG…LNIP), 191-211 (GIIV…ALMY), 247-267 (MYVM…GFIF), 285-305 (PLWV…FAFV), 343-363 (FSVI…LFVL), and 368-388 (LLRL…IFTI).

The protein belongs to the SecY/SEC61-alpha family. SecY2 subfamily. In terms of assembly, component of the accessory SecA2/SecY2 protein translocase complex required to export cell wall proteins. May form heterotrimers with SecE and SecG subunits.

It is found in the cell membrane. Its function is as follows. Part of the accessory SecA2/SecY2 system specifically required for export of possible cell wall proteins. The central subunit of a protein translocation channel. The sequence is that of Accessory Sec system protein translocase subunit SecY2 from Streptococcus pneumoniae serotype 4 (strain ATCC BAA-334 / TIGR4).